Reading from the N-terminus, the 377-residue chain is Leukocyte elastase inhibitor (377 aa).

Methionine 1 is modified (N-acetylmethionine).

Belongs to the serpin family. Ov-serpin subfamily.

The protein resides in the cytoplasm. In terms of biological role, regulates the activity of the neutrophil proteases. The polypeptide is Leukocyte elastase inhibitor (serpinb1) (Xenopus tropicalis (Western clawed frog)).